Consider the following 132-residue polypeptide: MTMTDPIADMLTRIRNANMVRHEKLEVPASNVKKEIAEILKREGFVRDVEYVEDNKQGIIRIFLKYGKDNERVITGLKRISKPGLRVYAKTNEVPKVLNGLGIALVSTSQGLLTDKEARAKQVGGEVLAYVW.

Belongs to the universal ribosomal protein uS8 family. In terms of assembly, part of the 30S ribosomal subunit. Contacts proteins S5 and S12.

In terms of biological role, one of the primary rRNA binding proteins, it binds directly to 16S rRNA central domain where it helps coordinate assembly of the platform of the 30S subunit. The sequence is that of Small ribosomal subunit protein uS8 from Lysinibacillus sphaericus (strain C3-41).